The chain runs to 372 residues: Queuine tRNA-ribosyltransferase (372 aa).

The active-site Proton acceptor is the Asp92. Residues 92–96 (DSGGY), Asp146, Gln188, and Gly215 each bind substrate. The tract at residues 246–252 (GIGSLRE) is RNA binding. The Nucleophile role is filled by Asp265. Positions 270–274 (TRLGR) are RNA binding; important for wobble base 34 recognition. Cys303, Cys305, Cys308, and His334 together coordinate Zn(2+).

It belongs to the queuine tRNA-ribosyltransferase family. Homodimer. Within each dimer, one monomer is responsible for RNA recognition and catalysis, while the other monomer binds to the replacement base PreQ1. Zn(2+) serves as cofactor.

It catalyses the reaction 7-aminomethyl-7-carbaguanine + guanosine(34) in tRNA = 7-aminomethyl-7-carbaguanosine(34) in tRNA + guanine. The protein operates within tRNA modification; tRNA-queuosine biosynthesis. Catalyzes the base-exchange of a guanine (G) residue with the queuine precursor 7-aminomethyl-7-deazaguanine (PreQ1) at position 34 (anticodon wobble position) in tRNAs with GU(N) anticodons (tRNA-Asp, -Asn, -His and -Tyr). Catalysis occurs through a double-displacement mechanism. The nucleophile active site attacks the C1' of nucleotide 34 to detach the guanine base from the RNA, forming a covalent enzyme-RNA intermediate. The proton acceptor active site deprotonates the incoming PreQ1, allowing a nucleophilic attack on the C1' of the ribose to form the product. After dissociation, two additional enzymatic reactions on the tRNA convert PreQ1 to queuine (Q), resulting in the hypermodified nucleoside queuosine (7-(((4,5-cis-dihydroxy-2-cyclopenten-1-yl)amino)methyl)-7-deazaguanosine). In Prochlorococcus marinus (strain MIT 9312), this protein is Queuine tRNA-ribosyltransferase.